A 332-amino-acid polypeptide reads, in one-letter code: Ribosomal RNA small subunit methyltransferase H (332 aa).

S-adenosyl-L-methionine is bound by residues 36-38, D54, F81, D102, and Q109; that span reads GGY. Residues 284–332 form a disordered region; that stretch reads VTAGQEEVSANPRARSAKLRAAERTAAPATADDGESPGWPSLANVMRGG.

It belongs to the methyltransferase superfamily. RsmH family.

Its subcellular location is the cytoplasm. The catalysed reaction is cytidine(1402) in 16S rRNA + S-adenosyl-L-methionine = N(4)-methylcytidine(1402) in 16S rRNA + S-adenosyl-L-homocysteine + H(+). Its function is as follows. Specifically methylates the N4 position of cytidine in position 1402 (C1402) of 16S rRNA. The protein is Ribosomal RNA small subunit methyltransferase H of Nitrobacter hamburgensis (strain DSM 10229 / NCIMB 13809 / X14).